A 415-amino-acid polypeptide reads, in one-letter code: Phosphoglycerate kinase (415 aa).

Substrate-binding positions include 27–29, Arg44, 67–70, Arg124, and Arg164; these read DIN and HQGR. ATP-binding positions include Glu336 and 362–365; that span reads GGHM.

It belongs to the phosphoglycerate kinase family. In terms of assembly, monomer.

The protein resides in the cytoplasm. It catalyses the reaction (2R)-3-phosphoglycerate + ATP = (2R)-3-phospho-glyceroyl phosphate + ADP. It functions in the pathway carbohydrate degradation; glycolysis; pyruvate from D-glyceraldehyde 3-phosphate: step 2/5. This chain is Phosphoglycerate kinase, found in Sulfurisphaera tokodaii (strain DSM 16993 / JCM 10545 / NBRC 100140 / 7) (Sulfolobus tokodaii).